Reading from the N-terminus, the 1403-residue chain is DNA-directed RNA polymerase subunit beta' (1403 aa).

Zn(2+) is bound by residues cysteine 71, cysteine 73, cysteine 86, and cysteine 89. Residues aspartate 462, aspartate 464, and aspartate 466 each contribute to the Mg(2+) site. Zn(2+) is bound by residues cysteine 811, cysteine 885, cysteine 892, and cysteine 895.

The protein belongs to the RNA polymerase beta' chain family. The RNAP catalytic core consists of 2 alpha, 1 beta, 1 beta' and 1 omega subunit. When a sigma factor is associated with the core the holoenzyme is formed, which can initiate transcription. The cofactor is Mg(2+). It depends on Zn(2+) as a cofactor.

The catalysed reaction is RNA(n) + a ribonucleoside 5'-triphosphate = RNA(n+1) + diphosphate. Functionally, DNA-dependent RNA polymerase catalyzes the transcription of DNA into RNA using the four ribonucleoside triphosphates as substrates. The chain is DNA-directed RNA polymerase subunit beta' from Bartonella bacilliformis (strain ATCC 35685 / KC583 / Herrer 020/F12,63).